A 274-amino-acid chain; its full sequence is 2,3,4,5-tetrahydropyridine-2,6-dicarboxylate N-succinyltransferase (274 aa).

R107 and D144 together coordinate substrate.

It belongs to the transferase hexapeptide repeat family. In terms of assembly, homotrimer.

The protein resides in the cytoplasm. It catalyses the reaction (S)-2,3,4,5-tetrahydrodipicolinate + succinyl-CoA + H2O = (S)-2-succinylamino-6-oxoheptanedioate + CoA. The protein operates within amino-acid biosynthesis; L-lysine biosynthesis via DAP pathway; LL-2,6-diaminopimelate from (S)-tetrahydrodipicolinate (succinylase route): step 1/3. The chain is 2,3,4,5-tetrahydropyridine-2,6-dicarboxylate N-succinyltransferase from Paracoccus denitrificans (strain Pd 1222).